The primary structure comprises 295 residues: Alpha-ketoglutarate-dependent dioxygenase alkB homolog 3 (295 aa).

A disordered region spans residues 1-48; it reads MGDKRQRARVQGAWATPTKSQSAARPATPARSRPSQTPGPSWRSKEQQ. Residues 22-35 show a composition bias toward low complexity; sequence SAARPATPARSRPS. Residues W115 and 141–143 each bind substrate; that span reads YTY. One can recognise a Fe2OG dioxygenase domain in the interval 172–278; sequence TFNSLLCNFY…RVNLTFRTVY (107 aa). L177 is modified ((4R)-5-hydroxyleucine; alternate). L177 carries the (4R)-5-oxoleucine; alternate modification. 179–181 is a 2-oxoglutarate binding site; sequence NFY. 2 residues coordinate Fe cation: H191 and D193. D194 is a substrate binding site. Residue H257 participates in Fe cation binding. 2-oxoglutarate contacts are provided by residues 269 to 275 and R275; that span reads RVNLTFR.

Belongs to the alkB family. In terms of assembly, interacts with the ASCC complex composed of ASCC1, ASCC2 and ASCC3. Interacts directly with ASCC3, and is thereby recruited to the ASCC complex. Interacts with OTUD4; the interaction is direct. Interacts with USP7 and USP9X. The cofactor is Fe(2+). Ubiquitinated; undergoes 'Lys-48'-linked polyubiquitination. OTUD4 promotes USP7 and USP9X-dependent deubiquitination of 'Lys-48'-polyubiquitinated ALKBH3 promoting the repair of alkylated DNA lesions.

It localises to the nucleus. Its subcellular location is the cytoplasm. The catalysed reaction is an N(1)-methyladenosine in mRNA + 2-oxoglutarate + O2 = an adenosine in mRNA + formaldehyde + succinate + CO2. The enzyme catalyses a methylated nucleobase within DNA + 2-oxoglutarate + O2 = a nucleobase within DNA + formaldehyde + succinate + CO2. It carries out the reaction an N(1)-methyl-2'-deoxyadenosine in single-stranded DNA + 2-oxoglutarate + O2 = a 2'-deoxyadenosine in single-stranded DNA + formaldehyde + succinate + CO2 + H(+). It catalyses the reaction an N(3)-methyl-2'-deoxycytidine in single-stranded DNA + 2-oxoglutarate + O2 = a 2'-deoxycytidine in single-stranded DNA + formaldehyde + succinate + CO2 + H(+). The catalysed reaction is a 3,N(4)-etheno-2'-deoxycytidine in single-stranded DNA + 2-oxoglutarate + O2 + H2O = a 2'-deoxycytidine in single-stranded DNA + glyoxal + succinate + CO2. With respect to regulation, activated by ascorbate. Its function is as follows. Dioxygenase that mediates demethylation of DNA and RNA containing 1-methyladenosine (m1A). Repairs alkylated DNA containing 1-methyladenosine (m1A) and 3-methylcytosine (m3C) by oxidative demethylation. Has a strong preference for single-stranded DNA. Able to process alkylated m3C within double-stranded regions via its interaction with ASCC3, which promotes DNA unwinding to generate single-stranded substrate needed for ALKBH3. Can repair exocyclic 3,N4-ethenocytosine adducs in single-stranded DNA. Also acts on RNA. Demethylates N(1)-methyladenosine (m1A) RNA, an epigenetic internal modification of messenger RNAs (mRNAs) highly enriched within 5'-untranslated regions (UTRs) and in the vicinity of start codons. Requires molecular oxygen, alpha-ketoglutarate and iron. This chain is Alpha-ketoglutarate-dependent dioxygenase alkB homolog 3, found in Rattus norvegicus (Rat).